The chain runs to 263 residues: tRNA (guanine-N(7)-)-methyltransferase (263 aa).

The disordered stretch occupies residues 1–33 (MSDHGRMHSTGSEVAAPVAPDPDTEGVHPHFNR). Positions 89, 114, 146, and 169 each coordinate S-adenosyl-L-methionine. Residue Asp169 is part of the active site. Substrate contacts are provided by residues Lys173, Asp205, and 242-245 (TKYE).

The protein belongs to the class I-like SAM-binding methyltransferase superfamily. TrmB family.

It carries out the reaction guanosine(46) in tRNA + S-adenosyl-L-methionine = N(7)-methylguanosine(46) in tRNA + S-adenosyl-L-homocysteine. Its pathway is tRNA modification; N(7)-methylguanine-tRNA biosynthesis. In terms of biological role, catalyzes the formation of N(7)-methylguanine at position 46 (m7G46) in tRNA. The sequence is that of tRNA (guanine-N(7)-)-methyltransferase from Mycolicibacterium gilvum (strain PYR-GCK) (Mycobacterium gilvum (strain PYR-GCK)).